The chain runs to 414 residues: L-cysteine:1D-myo-inositol 2-amino-2-deoxy-alpha-D-glucopyranoside ligase (414 aa).

The tract at residues 1-38 (MRSWPAPEVPNLPEAGLPGPALPLHLHDTATGTVRPTR) is disordered. Over residues 11–38 (NLPEAGLPGPALPLHLHDTATGTVRPTR) the composition is skewed to low complexity. Residue C48 coordinates Zn(2+). L-cysteinyl-5'-AMP-binding positions include 48-51 (CGIT), T63, and 86-88 (NVT). A 'HIGH' region motif is present at residues 50-60 (ITPYDATHLGH). The short motif at 188–193 (ERGGDP) is the 'ERGGDP' region element. L-cysteinyl-5'-AMP is bound at residue W228. C232 contacts Zn(2+). 250 to 252 (GSD) provides a ligand contact to L-cysteinyl-5'-AMP. A Zn(2+)-binding site is contributed by H257. V284 contacts L-cysteinyl-5'-AMP. The 'KMSKS' region signature appears at 290 to 294 (KMSKS).

This sequence belongs to the class-I aminoacyl-tRNA synthetase family. MshC subfamily. In terms of assembly, monomer. Zn(2+) serves as cofactor.

It catalyses the reaction 1D-myo-inositol 2-amino-2-deoxy-alpha-D-glucopyranoside + L-cysteine + ATP = 1D-myo-inositol 2-(L-cysteinylamino)-2-deoxy-alpha-D-glucopyranoside + AMP + diphosphate + H(+). Functionally, catalyzes the ATP-dependent condensation of GlcN-Ins and L-cysteine to form L-Cys-GlcN-Ins. The polypeptide is L-cysteine:1D-myo-inositol 2-amino-2-deoxy-alpha-D-glucopyranoside ligase (Thermomonospora curvata (strain ATCC 19995 / DSM 43183 / JCM 3096 / KCTC 9072 / NBRC 15933 / NCIMB 10081 / Henssen B9)).